The primary structure comprises 63 residues: Prokaryotic ubiquitin-like protein Pup (63 aa).

Positions 1–28 (MSDRQTQIPAGGGREDDHDDQVQSAGQV) are disordered. The segment at 19–57 (DDQVQSAGQVQVNTEGVDDLLDEIDGLLENNAEEFVRSY) is ARC ATPase binding. Glu-63 is covalently cross-linked (Isoglutamyl lysine isopeptide (Glu-Lys) (interchain with K-? in acceptor proteins)).

This sequence belongs to the prokaryotic ubiquitin-like protein family. In terms of assembly, strongly interacts with the proteasome-associated ATPase ARC through a hydrophobic interface; the interacting region of Pup lies in its C-terminal half. There is one Pup binding site per ARC hexamer ring.

It participates in protein degradation; proteasomal Pup-dependent pathway. In terms of biological role, protein modifier that is covalently attached to lysine residues of substrate proteins, thereby targeting them for proteasomal degradation. The tagging system is termed pupylation. The sequence is that of Prokaryotic ubiquitin-like protein Pup from Corynebacterium efficiens (strain DSM 44549 / YS-314 / AJ 12310 / JCM 11189 / NBRC 100395).